The following is a 60-amino-acid chain: Large ribosomal subunit protein bL32 (60 aa).

The segment at 1–46 (MAVQQNKKSPSKRGMHRSHNALNTPGTAIEPTTGEVHLRHHISPTG) is disordered. Positions 9 to 19 (SPSKRGMHRSH) are enriched in basic residues.

It belongs to the bacterial ribosomal protein bL32 family.

The polypeptide is Large ribosomal subunit protein bL32 (Leptothrix cholodnii (strain ATCC 51168 / LMG 8142 / SP-6) (Leptothrix discophora (strain SP-6))).